The sequence spans 388 residues: Alpha-2B adrenergic receptor (388 aa).

Residues 1–25 (AIAAVITFLILFTIFGNALVILAVL) form a helical membrane-spanning segment. At 26 to 36 (TSRSLRAPQNL) the chain is on the cytoplasmic side. The chain crosses the membrane as a helical span at residues 37 to 62 (FLVSLAAADILVATLIIPFSLANELL). At 63–72 (GYWYFRRTWC) the chain is on the extracellular side. A disulfide bridge links Cys-72 with Cys-151. Residues 73–95 (EVYLALDVLFCTSSIVHLCAISL) traverse the membrane as a helical segment. The Cytoplasmic segment spans residues 96 to 117 (DRYWAVSRALEYNSKRTPRXIK). The helical transmembrane segment at 118 to 140 (CIILTVWLIAAAISLPPLIYKGD) threads the bilayer. Residues 141-156 (QGPQPRGRPQCKLNQE) are Extracellular-facing. Residues 157 to 180 (AWYILSSSIGSFFAPCLIMILVYL) traverse the membrane as a helical segment. Topologically, residues 181–352 (RIYVIAKRSN…LTREKRFTFV (172 aa)) are cytoplasmic. The segment at 193-309 (GPRAKGASRE…ASACNPPLQQ (117 aa)) is disordered. Residues 239–249 (PTGEKEGKTPE) are compositionally biased toward basic and acidic residues. A compositionally biased stretch (acidic residues) spans 279 to 291 (PEEEAEEEEEECE). Low complexity predominate over residues 292 to 302 (PQAAPASSASA). A helical transmembrane segment spans residues 353–376 (LAVVIGVFVLCWFPFFFSYSLGAI). Over 377–385 (CPQRCKVPH) the chain is Extracellular. Residues 386-388 (GLF) form a helical membrane-spanning segment.

It belongs to the G-protein coupled receptor 1 family. Adrenergic receptor subfamily. ADRA2B sub-subfamily. Interacts with RAB26. Interacts with PPP1R9B.

It localises to the cell membrane. Functionally, alpha-2 adrenergic receptors mediate the catecholamine-induced inhibition of adenylate cyclase through the action of G proteins. This is Alpha-2B adrenergic receptor (ADRA2B) from Orycteropus afer (Aardvark).